Reading from the N-terminus, the 354-residue chain is Uroporphyrinogen decarboxylase (354 aa).

Residues R25–R29, D75, Y152, T207, and H330 each bind substrate.

This sequence belongs to the uroporphyrinogen decarboxylase family. Homodimer.

The protein resides in the cytoplasm. It carries out the reaction uroporphyrinogen III + 4 H(+) = coproporphyrinogen III + 4 CO2. Its pathway is porphyrin-containing compound metabolism; protoporphyrin-IX biosynthesis; coproporphyrinogen-III from 5-aminolevulinate: step 4/4. Catalyzes the decarboxylation of four acetate groups of uroporphyrinogen-III to yield coproporphyrinogen-III. The chain is Uroporphyrinogen decarboxylase from Xanthomonas oryzae pv. oryzae (strain PXO99A).